Here is a 544-residue protein sequence, read N- to C-terminus: Pentatricopeptide repeat-containing protein At1g66345, mitochondrial (544 aa).

Residues 1-116 constitute a mitochondrion transit peptide; that stretch reads MASALRRLVE…RNLRHGIKSY (116 aa). 11 PPR repeats span residues 163 to 197, 198 to 232, 233 to 267, 268 to 302, 303 to 337, 338 to 372, 373 to 407, 408 to 442, 443 to 477, 478 to 512, and 513 to 544; these read TPLV…GFTL, SVIT…RIYP, NEIT…RCLP, SVIV…NMVV, DTIG…GFSA, NSFV…GVSP, YDET…GLMP, SCSA…GFVP, DEHT…KMSP, GFEV…LIEP, and NADI…ISVR.

It belongs to the PPR family. P subfamily.

Its subcellular location is the mitochondrion. This Arabidopsis thaliana (Mouse-ear cress) protein is Pentatricopeptide repeat-containing protein At1g66345, mitochondrial.